The sequence spans 457 residues: Argininosuccinate lyase (457 aa).

This sequence belongs to the lyase 1 family. Argininosuccinate lyase subfamily.

It localises to the cytoplasm. The enzyme catalyses 2-(N(omega)-L-arginino)succinate = fumarate + L-arginine. The protein operates within amino-acid biosynthesis; L-arginine biosynthesis; L-arginine from L-ornithine and carbamoyl phosphate: step 3/3. The protein is Argininosuccinate lyase of Escherichia fergusonii (strain ATCC 35469 / DSM 13698 / CCUG 18766 / IAM 14443 / JCM 21226 / LMG 7866 / NBRC 102419 / NCTC 12128 / CDC 0568-73).